The primary structure comprises 306 residues: UDP-3-O-acyl-N-acetylglucosamine deacetylase (306 aa).

Zn(2+)-binding residues include His-78, His-237, and Asp-241. The Proton donor role is filled by His-264.

This sequence belongs to the LpxC family. Requires Zn(2+) as cofactor.

It carries out the reaction a UDP-3-O-[(3R)-3-hydroxyacyl]-N-acetyl-alpha-D-glucosamine + H2O = a UDP-3-O-[(3R)-3-hydroxyacyl]-alpha-D-glucosamine + acetate. Its pathway is glycolipid biosynthesis; lipid IV(A) biosynthesis; lipid IV(A) from (3R)-3-hydroxytetradecanoyl-[acyl-carrier-protein] and UDP-N-acetyl-alpha-D-glucosamine: step 2/6. Its function is as follows. Catalyzes the hydrolysis of UDP-3-O-myristoyl-N-acetylglucosamine to form UDP-3-O-myristoylglucosamine and acetate, the committed step in lipid A biosynthesis. In Aromatoleum aromaticum (strain DSM 19018 / LMG 30748 / EbN1) (Azoarcus sp. (strain EbN1)), this protein is UDP-3-O-acyl-N-acetylglucosamine deacetylase.